A 447-amino-acid polypeptide reads, in one-letter code: Phosphoglucosamine mutase (447 aa).

The active-site Phosphoserine intermediate is the Ser100. Mg(2+) contacts are provided by Ser100, Asp239, Asp241, and Asp243. Ser100 carries the post-translational modification Phosphoserine.

It belongs to the phosphohexose mutase family. Mg(2+) is required as a cofactor. Post-translationally, activated by phosphorylation.

It carries out the reaction alpha-D-glucosamine 1-phosphate = D-glucosamine 6-phosphate. Functionally, catalyzes the conversion of glucosamine-6-phosphate to glucosamine-1-phosphate. The protein is Phosphoglucosamine mutase of Caldanaerobacter subterraneus subsp. tengcongensis (strain DSM 15242 / JCM 11007 / NBRC 100824 / MB4) (Thermoanaerobacter tengcongensis).